The sequence spans 214 residues: A-type ATP synthase subunit D (214 aa).

The protein belongs to the V-ATPase D subunit family. Has multiple subunits with at least A(3), B(3), C, D, E, F, H, I and proteolipid K(x).

The protein localises to the cell membrane. Its function is as follows. Component of the A-type ATP synthase that produces ATP from ADP in the presence of a proton gradient across the membrane. The chain is A-type ATP synthase subunit D from Thermococcus gammatolerans (strain DSM 15229 / JCM 11827 / EJ3).